The primary structure comprises 81 residues: MRKLALVPIQFYRYAISPLMANHCRFFPSCSCYAYEAIENHGIWRGGWLAVRRLGRCHPWNDGGFDPVPPAPSSRTSSIAE.

The tract at residues 61-81 (NDGGFDPVPPAPSSRTSSIAE) is disordered.

Belongs to the UPF0161 family.

Its subcellular location is the cell inner membrane. In terms of biological role, could be involved in insertion of integral membrane proteins into the membrane. The sequence is that of Putative membrane protein insertion efficiency factor from Pseudomonas putida (strain ATCC 700007 / DSM 6899 / JCM 31910 / BCRC 17059 / LMG 24140 / F1).